Here is a 400-residue protein sequence, read N- to C-terminus: Phosphoglycerate kinase (400 aa).

Substrate-binding positions include 23–25 (DLN), arginine 38, 61–64 (HFGR), arginine 120, and arginine 153. ATP contacts are provided by residues lysine 203, glutamate 325, and 355–358 (GGDT).

The protein belongs to the phosphoglycerate kinase family. As to quaternary structure, monomer.

It localises to the cytoplasm. The catalysed reaction is (2R)-3-phosphoglycerate + ATP = (2R)-3-phospho-glyceroyl phosphate + ADP. Its pathway is carbohydrate degradation; glycolysis; pyruvate from D-glyceraldehyde 3-phosphate: step 2/5. The sequence is that of Phosphoglycerate kinase from Methylorubrum populi (strain ATCC BAA-705 / NCIMB 13946 / BJ001) (Methylobacterium populi).